We begin with the raw amino-acid sequence, 304 residues long: UDP-N-acetylenolpyruvoylglucosamine reductase (304 aa).

One can recognise an FAD-binding PCMH-type domain in the interval 31–196; the sequence is RVGGPAERFY…VAAELELAPG (166 aa). Arg176 is a catalytic residue. Residue Ser225 is the Proton donor of the active site. Residue Glu295 is part of the active site.

The protein belongs to the MurB family. The cofactor is FAD.

It is found in the cytoplasm. It catalyses the reaction UDP-N-acetyl-alpha-D-muramate + NADP(+) = UDP-N-acetyl-3-O-(1-carboxyvinyl)-alpha-D-glucosamine + NADPH + H(+). The protein operates within cell wall biogenesis; peptidoglycan biosynthesis. Functionally, cell wall formation. The polypeptide is UDP-N-acetylenolpyruvoylglucosamine reductase (Methylococcus capsulatus (strain ATCC 33009 / NCIMB 11132 / Bath)).